The sequence spans 340 residues: MAINVYYDKDCDLSLIQSRKVAIIGFGSQGHAHAENLRDNGVSVVIGLVKGGKSWAKAEAKGFEVKTVSEATKGADVIMILTPDELQAEIYKNEIEPNLKDHAAIAFGHGFNVHFGQIKAPANIDVIMIAPKAPGHTVRSEFLRGGGIPDLIAVEQNASGKAKEIALSYACGIGGGRTGIIETTFKDETETDLFGEQAVLCGGLCALVNAGFDTLVEAGYEPEMAYFECLHELKLIVDLMYQGGMADMRYSISNTAEYGDYVSGVRVVGEESRKAMKEVLKEIQNGKFAKDFILERKAGYVRMNAERGIAERSLLNKTGKKLRAMMPWITNGKLIDQSKN.

The KARI N-terminal Rossmann domain occupies 3–183 (INVYYDKDCD…GGGRTGIIET (181 aa)). Residues 26-29 (FGSQ), Ser-54, and 84-87 (DELQ) contribute to the NADP(+) site. His-109 is an active-site residue. Gly-135 provides a ligand contact to NADP(+). One can recognise a KARI C-terminal knotted domain in the interval 184–329 (TFKDETETDL…KKLRAMMPWI (146 aa)). Positions 192, 196, 228, and 232 each coordinate Mg(2+). Ser-253 provides a ligand contact to substrate.

Belongs to the ketol-acid reductoisomerase family. Mg(2+) is required as a cofactor.

The catalysed reaction is (2R)-2,3-dihydroxy-3-methylbutanoate + NADP(+) = (2S)-2-acetolactate + NADPH + H(+). It catalyses the reaction (2R,3R)-2,3-dihydroxy-3-methylpentanoate + NADP(+) = (S)-2-ethyl-2-hydroxy-3-oxobutanoate + NADPH + H(+). It participates in amino-acid biosynthesis; L-isoleucine biosynthesis; L-isoleucine from 2-oxobutanoate: step 2/4. It functions in the pathway amino-acid biosynthesis; L-valine biosynthesis; L-valine from pyruvate: step 2/4. In terms of biological role, involved in the biosynthesis of branched-chain amino acids (BCAA). Catalyzes an alkyl-migration followed by a ketol-acid reduction of (S)-2-acetolactate (S2AL) to yield (R)-2,3-dihydroxy-isovalerate. In the isomerase reaction, S2AL is rearranged via a Mg-dependent methyl migration to produce 3-hydroxy-3-methyl-2-ketobutyrate (HMKB). In the reductase reaction, this 2-ketoacid undergoes a metal-dependent reduction by NADPH to yield (R)-2,3-dihydroxy-isovalerate. This chain is Ketol-acid reductoisomerase (NADP(+)), found in Campylobacter concisus (strain 13826).